We begin with the raw amino-acid sequence, 574 residues long: Phospholipase B-like protein A (574 aa).

Residues 1 to 20 (MRVIRSLLLLTIAIIGSVLS) form the signal peptide. Residues asparagine 159, asparagine 195, and asparagine 415 are each glycosylated (N-linked (GlcNAc...) asparagine).

Belongs to the phospholipase B-like family.

It localises to the secreted. Its function is as follows. Phospholipase that removes both fatty-acid chains from phosphatidylcholine and produces the water-soluble glycerophosphorylcholine. In addition to phosphatidylcholine deacylation, it also hydrolyzes phosphatidylinositol and phosphatidylethanolamine. The sequence is that of Phospholipase B-like protein A (plbA) from Dictyostelium discoideum (Social amoeba).